Reading from the N-terminus, the 85-residue chain is Neurtoxin 10 (85 aa).

A signal peptide spans 1–23 (MKFCVAVSLLIIASMAGVISVSG). The LCN-type CS-alpha/beta domain maps to 24–85 (YDVYPRDYAE…NFLSVIWKHC (62 aa)). Disulfide bonds link Cys38–Cys60, Cys46–Cys65, and Cys50–Cys67.

Belongs to the long (3 C-C) scorpion toxin superfamily. In terms of tissue distribution, expressed by the venom gland.

The protein resides in the secreted. The chain is Neurtoxin 10 from Lychas mucronatus (Chinese swimming scorpion).